We begin with the raw amino-acid sequence, 64 residues long: Large ribosomal subunit protein bL33c (64 aa).

It belongs to the bacterial ribosomal protein bL33 family.

The protein resides in the plastid. It is found in the organellar chromatophore. The protein is Large ribosomal subunit protein bL33c of Paulinella chromatophora.